Reading from the N-terminus, the 67-residue chain is uncharacterized protein (67 aa).

The next 2 membrane-spanning stretches (helical) occupy residues 10 to 30 (EFFI…IIMW) and 40 to 60 (LMVG…WMVF).

The protein belongs to the plectrovirus ORF10 family.

The protein localises to the host membrane. This is an uncharacterized protein from Spiroplasma melliferum (SpV1).